The primary structure comprises 341 residues: S-adenosylmethionine:tRNA ribosyltransferase-isomerase (341 aa).

This sequence belongs to the QueA family. Monomer.

Its subcellular location is the cytoplasm. The enzyme catalyses 7-aminomethyl-7-carbaguanosine(34) in tRNA + S-adenosyl-L-methionine = epoxyqueuosine(34) in tRNA + adenine + L-methionine + 2 H(+). Its pathway is tRNA modification; tRNA-queuosine biosynthesis. Its function is as follows. Transfers and isomerizes the ribose moiety from AdoMet to the 7-aminomethyl group of 7-deazaguanine (preQ1-tRNA) to give epoxyqueuosine (oQ-tRNA). The sequence is that of S-adenosylmethionine:tRNA ribosyltransferase-isomerase from Herminiimonas arsenicoxydans.